The following is a 612-amino-acid chain: Anaerobic magnesium-protoporphyrin IX monomethyl ester cyclase (612 aa).

The B12-binding domain maps to 9-143 (NYHSGGAEIA…KAYEADNFAE (135 aa)). The region spanning 190 to 417 (PLGVRVAIPN…MKPKALTRGE (228 aa)) is the Radical SAM core domain. The [4Fe-4S] cluster site is built by cysteine 204, cysteine 208, and cysteine 211.

It belongs to the BchE family. [4Fe-4S] cluster is required as a cofactor. It depends on adenosylcob(III)alamin as a cofactor.

The catalysed reaction is Mg-protoporphyrin IX 13-monomethyl ester + 3 S-adenosyl-L-methionine + H2O = 3,8-divinyl protochlorophyllide a + 3 5'-deoxyadenosine + 3 L-methionine + 4 H(+). It participates in porphyrin-containing compound metabolism; bacteriochlorophyll biosynthesis (light-independent). Functionally, involved in the tetrapyrrole biosynthetic pathways leading to chlorophyll and bacteriochlorophyll (BChl). Catalyzes the anaerobic formation of the isocyclic ring (E-ring) in Mg-protoporphyrin monomethyl ester (MPE) to yield protochlorophyllide a (PChlide a) via a six-electron oxidation and the formation of an oxo group at position C13 using oxygen from a water molecule. This is Anaerobic magnesium-protoporphyrin IX monomethyl ester cyclase from Cereibacter sphaeroides (strain ATCC 17023 / DSM 158 / JCM 6121 / CCUG 31486 / LMG 2827 / NBRC 12203 / NCIMB 8253 / ATH 2.4.1.) (Rhodobacter sphaeroides).